The following is a 273-amino-acid chain: MSTIRPVFYVSDGTGITAETIGHSLLTQFSGFNFVTDRMSFIDDADKARDAALRVRAAGERYQVRPVVVNSCVDPQLSMILAESGALMLDVFAPFIEPLERELNAPRHSRVGRAHGMVDFETYHRRINAMNFALSHDDGIALNYDEADVILVAVSRAGKTPTCIYLALHYGIRAANYPLTEEDLESERLPPRLRNYRSKLFGLTIDPERLQQIRQERRANSRYSAAETCRREVATAERMFQMERIPTLSTTNTSIEEISSKVLSTLGLQREMF.

153–160 is an ADP binding site; it reads AVSRAGKT.

The protein belongs to the pyruvate, phosphate/water dikinase regulatory protein family. PSRP subfamily.

It carries out the reaction [pyruvate, water dikinase] + ADP = [pyruvate, water dikinase]-phosphate + AMP + H(+). It catalyses the reaction [pyruvate, water dikinase]-phosphate + phosphate + H(+) = [pyruvate, water dikinase] + diphosphate. Bifunctional serine/threonine kinase and phosphorylase involved in the regulation of the phosphoenolpyruvate synthase (PEPS) by catalyzing its phosphorylation/dephosphorylation. The protein is Putative phosphoenolpyruvate synthase regulatory protein of Xanthomonas campestris pv. campestris (strain 8004).